Reading from the N-terminus, the 248-residue chain is 1-(5-phosphoribosyl)-5-[(5-phosphoribosylamino)methylideneamino] imidazole-4-carboxamide isomerase (248 aa).

Catalysis depends on Asp-8, which acts as the Proton acceptor. Catalysis depends on Asp-129, which acts as the Proton donor.

The protein belongs to the HisA/HisF family.

It is found in the cytoplasm. The catalysed reaction is 1-(5-phospho-beta-D-ribosyl)-5-[(5-phospho-beta-D-ribosylamino)methylideneamino]imidazole-4-carboxamide = 5-[(5-phospho-1-deoxy-D-ribulos-1-ylimino)methylamino]-1-(5-phospho-beta-D-ribosyl)imidazole-4-carboxamide. Its pathway is amino-acid biosynthesis; L-histidine biosynthesis; L-histidine from 5-phospho-alpha-D-ribose 1-diphosphate: step 4/9. The sequence is that of 1-(5-phosphoribosyl)-5-[(5-phosphoribosylamino)methylideneamino] imidazole-4-carboxamide isomerase from Rhizobium etli (strain ATCC 51251 / DSM 11541 / JCM 21823 / NBRC 15573 / CFN 42).